Reading from the N-terminus, the 362-residue chain is Chorismate synthase (362 aa).

Arg-46 serves as a coordination point for NADP(+). Residues 122–124, 238–239, Gly-278, 293–297, and Arg-319 each bind FMN; these read RSS, NA, and KPTPS.

It belongs to the chorismate synthase family. Homotetramer. Requires FMNH2 as cofactor.

The enzyme catalyses 5-O-(1-carboxyvinyl)-3-phosphoshikimate = chorismate + phosphate. It participates in metabolic intermediate biosynthesis; chorismate biosynthesis; chorismate from D-erythrose 4-phosphate and phosphoenolpyruvate: step 7/7. Catalyzes the anti-1,4-elimination of the C-3 phosphate and the C-6 proR hydrogen from 5-enolpyruvylshikimate-3-phosphate (EPSP) to yield chorismate, which is the branch point compound that serves as the starting substrate for the three terminal pathways of aromatic amino acid biosynthesis. This reaction introduces a second double bond into the aromatic ring system. The polypeptide is Chorismate synthase (Campylobacter jejuni subsp. jejuni serotype O:23/36 (strain 81-176)).